We begin with the raw amino-acid sequence, 159 residues long: Developmental pluripotency-associated protein 3 (159 aa).

Disordered stretches follow at residues methionine 1–glutamine 31 and glycine 140–proline 159. Polar residues predominate over residues isoleucine 149–proline 159.

Low expression in testis, ovary and thymus. Expressed in embryonic stem and carcinoma cells. Highly expressed in testicular germ cell tumors.

It localises to the nucleus. Its subcellular location is the cytoplasm. Its function is as follows. Primordial germ cell (PGCs)-specific protein involved in epigenetic chromatin reprogramming in the zygote following fertilization. In zygotes, DNA demethylation occurs selectively in the paternal pronucleus before the first cell division, while the adjacent maternal pronucleus and certain paternally-imprinted loci are protected from this process. Participates in protection of DNA methylation in the maternal pronucleus by preventing conversion of 5mC to 5hmC: specifically recognizes and binds histone H3 dimethylated at 'Lys-9' (H3K9me2) on maternal genome, and protects maternal genome from TET3-mediated conversion to 5hmC and subsequent DNA demethylation. Does not bind paternal chromatin, which is mainly packed into protamine and does not contain much H3K9me2 mark. Also protects imprinted loci that are marked with H3K9me2 in mature sperm from DNA demethylation in early embryogenesis. May be important for the totipotent/pluripotent states continuing through preimplantation development. Also involved in chromatin condensation in oocytogenesis. The sequence is that of Developmental pluripotency-associated protein 3 (DPPA3) from Homo sapiens (Human).